The following is a 414-amino-acid chain: Serine hydroxymethyltransferase (414 aa).

(6S)-5,6,7,8-tetrahydrofolate-binding positions include Leu-121 and 125–127 (GHL). Lys-229 carries the N6-(pyridoxal phosphate)lysine modification.

The protein belongs to the SHMT family. Homodimer. It depends on pyridoxal 5'-phosphate as a cofactor.

It localises to the cytoplasm. It carries out the reaction (6R)-5,10-methylene-5,6,7,8-tetrahydrofolate + glycine + H2O = (6S)-5,6,7,8-tetrahydrofolate + L-serine. It participates in one-carbon metabolism; tetrahydrofolate interconversion. Its pathway is amino-acid biosynthesis; glycine biosynthesis; glycine from L-serine: step 1/1. Its function is as follows. Catalyzes the reversible interconversion of serine and glycine with tetrahydrofolate (THF) serving as the one-carbon carrier. This reaction serves as the major source of one-carbon groups required for the biosynthesis of purines, thymidylate, methionine, and other important biomolecules. Also exhibits THF-independent aldolase activity toward beta-hydroxyamino acids, producing glycine and aldehydes, via a retro-aldol mechanism. The chain is Serine hydroxymethyltransferase from Polynucleobacter necessarius subsp. necessarius (strain STIR1).